Here is a 234-residue protein sequence, read N- to C-terminus: Phosphoribosylaminoimidazole-succinocarboxamide synthase (234 aa).

It belongs to the SAICAR synthetase family.

The enzyme catalyses 5-amino-1-(5-phospho-D-ribosyl)imidazole-4-carboxylate + L-aspartate + ATP = (2S)-2-[5-amino-1-(5-phospho-beta-D-ribosyl)imidazole-4-carboxamido]succinate + ADP + phosphate + 2 H(+). Its pathway is purine metabolism; IMP biosynthesis via de novo pathway; 5-amino-1-(5-phospho-D-ribosyl)imidazole-4-carboxamide from 5-amino-1-(5-phospho-D-ribosyl)imidazole-4-carboxylate: step 1/2. The sequence is that of Phosphoribosylaminoimidazole-succinocarboxamide synthase from Streptococcus pyogenes serotype M1.